The sequence spans 161 residues: Phosphopantetheine adenylyltransferase (161 aa).

Position 9 (Ser9) interacts with substrate. Residues 9 to 10 (SF) and His17 contribute to the ATP site. The substrate site is built by Lys41, Thr73, and Arg87. ATP contacts are provided by residues 88 to 90 (GLR), Glu98, and 123 to 129 (FAHISST).

Belongs to the bacterial CoaD family. Homohexamer. It depends on Mg(2+) as a cofactor.

Its subcellular location is the cytoplasm. The enzyme catalyses (R)-4'-phosphopantetheine + ATP + H(+) = 3'-dephospho-CoA + diphosphate. It participates in cofactor biosynthesis; coenzyme A biosynthesis; CoA from (R)-pantothenate: step 4/5. In terms of biological role, reversibly transfers an adenylyl group from ATP to 4'-phosphopantetheine, yielding dephospho-CoA (dPCoA) and pyrophosphate. In Chloroflexus aggregans (strain MD-66 / DSM 9485), this protein is Phosphopantetheine adenylyltransferase.